The following is a 566-amino-acid chain: Serine/threonine-protein kinase haspin homolog (566 aa).

The 319-residue stretch at 248–566 folds into the Protein kinase domain; sequence LLNTKKIGEG…HCANYLFNLN (319 aa). Residues 254–262, K282, 377–382, 418–423, and 456–458 each bind ATP; these read IGEGAYGEV, KFAGSD, DLHLGN, and DYT. The Proton acceptor role is filled by D418.

The protein belongs to the protein kinase superfamily. Ser/Thr protein kinase family. Haspin subfamily. As to quaternary structure, interacts with pds5 and vtd. Mg(2+) is required as a cofactor.

Its subcellular location is the nucleus lamina. The protein resides in the chromosome. It localises to the cytoplasm. It is found in the cytoskeleton. The protein localises to the spindle. The enzyme catalyses L-seryl-[protein] + ATP = O-phospho-L-seryl-[protein] + ADP + H(+). The catalysed reaction is L-threonyl-[protein] + ATP = O-phospho-L-threonyl-[protein] + ADP + H(+). Serine/threonine-protein kinase that phosphorylates histone H3 at 'Thr-4' (H3T3ph) during mitosis and interphase. Function is essential for chromosome organization during mitosis and genome organization in interphase cells, thus playing a functional role in gene regulation. During mitosis, may act through H3T3ph to both position and modulate activation of AURKB and other components of the chromosomal passenger complex (CPC) at centromeres to ensure proper chromatid cohesion, metaphase alignment and normal progression through the cell cycle. During interphase, associates with the cohesion complex and mediates pds5 binding to chromatin to ensure correct sister chromatid cohesion, chromatin organization, and also functions with Pds5-cohesin to modify Polycomb-dependent homeotic transformations. Function during interphase is required for insulator activity, nuclear compaction, heterochromatin-induced position-effect variegation and PcG-mediated pairing-sensitive silencing. The chain is Serine/threonine-protein kinase haspin homolog from Drosophila melanogaster (Fruit fly).